Here is a 186-residue protein sequence, read N- to C-terminus: Ribosome-recycling factor (186 aa).

This sequence belongs to the RRF family.

It localises to the cytoplasm. In terms of biological role, responsible for the release of ribosomes from messenger RNA at the termination of protein biosynthesis. May increase the efficiency of translation by recycling ribosomes from one round of translation to another. The protein is Ribosome-recycling factor of Rickettsia prowazekii (strain Madrid E).